Reading from the N-terminus, the 1113-residue chain is Tudor domain-containing protein 7 (1113 aa).

HTH OST-type domains lie at 3–76 and 249–318; these read EADL…YAVA and KMDE…YPAK. Basic and acidic residues predominate over residues 320-334; the sequence is EQPLRSDQDPEKERP. The tract at residues 320–352 is disordered; sequence EQPLRSDQDPEKERPPPPPAPRQEVPSKGSPAV. The 70-residue stretch at 352–421 folds into the HTH OST-type 3 domain; it reads VMPDVKEKVA…TQKAILYAKL (70 aa). 2 Tudor domains span residues 528 to 585 and 718 to 775; these read TVHV…FCSL and LPFC…FLQE. Residues 873–895 form a disordered region; that stretch reads SSPGNRNASTPAPGSPAESLRKS. A Phosphoserine modification is found at Ser-874. The segment covering 875-884 has biased composition (polar residues); that stretch reads PGNRNASTPA. Residues 876 to 1113 are interaction with CDK17; sequence GNRNASTPAP…QYLVELSKAN (238 aa). An interaction with CABLES1 region spans residues 908-1113; it reads TSSFSLEELP…QYLVELSKAN (206 aa).

It belongs to the TDRD7 family. Found in a mRNP complex, at least composed of TDRD1, TDRD6, TDRD7 and DDX4. Found in a complex containing CABLES1, CDK16 and CDK17. Interacts with CABLES1, CDK17 and PIWIL1. Expressed in brain and testis.

The protein localises to the cytoplasm. Functionally, component of specific cytoplasmic RNA granules involved in post-transcriptional regulation of specific genes: probably acts by binding to specific mRNAs and regulating their translation. Required for lens transparency during lens development, by regulating translation of genes such as CRYBB3 and HSPB1 in the developing lens. Also required during spermatogenesis. The sequence is that of Tudor domain-containing protein 7 (Tdrd7) from Rattus norvegicus (Rat).